Consider the following 175-residue polypeptide: Gamma-crystallin B (175 aa).

Beta/gamma crystallin 'Greek key' domains lie at 2–40 (GKIT…RVES) and 41–83 (GCWM…HLIP). The tract at residues 84–88 (PHSGT) is connecting peptide. Beta/gamma crystallin 'Greek key' domains lie at 89 to 129 (YRMK…NVLE) and 130 to 172 (GSWI…RRVM).

This sequence belongs to the beta/gamma-crystallin family. As to quaternary structure, monomer.

In terms of biological role, crystallins are the dominant structural components of the vertebrate eye lens. The sequence is that of Gamma-crystallin B (CRYGB) from Macaca mulatta (Rhesus macaque).